Reading from the N-terminus, the 214-residue chain is Isochorismatase family protein 2B (214 aa).

This sequence belongs to the isochorismatase family.

In Dictyostelium discoideum (Social amoeba), this protein is Isochorismatase family protein 2B.